A 204-amino-acid polypeptide reads, in one-letter code: Ribonuclease HII (204 aa).

An RNase H type-2 domain is found at 17 to 204; it reads TLIAGVDEVG…KPVKKVLGLL (188 aa). A divalent metal cation is bound by residues Asp23, Glu24, and Asp115.

Belongs to the RNase HII family. Requires Mn(2+) as cofactor. Mg(2+) is required as a cofactor.

Its subcellular location is the cytoplasm. The enzyme catalyses Endonucleolytic cleavage to 5'-phosphomonoester.. In terms of biological role, endonuclease that specifically degrades the RNA of RNA-DNA hybrids. In Psychromonas ingrahamii (strain DSM 17664 / CCUG 51855 / 37), this protein is Ribonuclease HII.